The chain runs to 228 residues: Cytochrome c oxidase subunit 2 (228 aa).

Residues 1-26 (MSTWANLGLQDSASPLMEQLIFFHDH) lie on the Mitochondrial intermembrane side of the membrane. The chain crosses the membrane as a helical span at residues 27 to 48 (ALLILVMITVLVGYLMFMLFFN). At 49–62 (NYVNRFLLHGQLIE) the chain is on the mitochondrial matrix side. The chain crosses the membrane as a helical span at residues 63–82 (MIWTILPAIILLFIALPSLR). Over 83–228 (LLYLLDEINE…FIKWISSNNS (146 aa)) the chain is Mitochondrial intermembrane. Residues His161, Cys196, Glu198, Cys200, His204, and Met207 each contribute to the Cu cation site. Position 198 (Glu198) interacts with Mg(2+).

It belongs to the cytochrome c oxidase subunit 2 family. Component of the cytochrome c oxidase (complex IV, CIV), a multisubunit enzyme composed of a catalytic core of 3 subunits and several supernumerary subunits. The complex exists as a monomer or a dimer and forms supercomplexes (SCs) in the inner mitochondrial membrane with ubiquinol-cytochrome c oxidoreductase (cytochrome b-c1 complex, complex III, CIII). It depends on Cu cation as a cofactor.

It is found in the mitochondrion inner membrane. The enzyme catalyses 4 Fe(II)-[cytochrome c] + O2 + 8 H(+)(in) = 4 Fe(III)-[cytochrome c] + 2 H2O + 4 H(+)(out). Its function is as follows. Component of the cytochrome c oxidase, the last enzyme in the mitochondrial electron transport chain which drives oxidative phosphorylation. The respiratory chain contains 3 multisubunit complexes succinate dehydrogenase (complex II, CII), ubiquinol-cytochrome c oxidoreductase (cytochrome b-c1 complex, complex III, CIII) and cytochrome c oxidase (complex IV, CIV), that cooperate to transfer electrons derived from NADH and succinate to molecular oxygen, creating an electrochemical gradient over the inner membrane that drives transmembrane transport and the ATP synthase. Cytochrome c oxidase is the component of the respiratory chain that catalyzes the reduction of oxygen to water. Electrons originating from reduced cytochrome c in the intermembrane space (IMS) are transferred via the dinuclear copper A center (CU(A)) of subunit 2 and heme A of subunit 1 to the active site in subunit 1, a binuclear center (BNC) formed by heme A3 and copper B (CU(B)). The BNC reduces molecular oxygen to 2 water molecules using 4 electrons from cytochrome c in the IMS and 4 protons from the mitochondrial matrix. The protein is Cytochrome c oxidase subunit 2 (mt:CoII) of Drosophila simulans (Fruit fly).